A 306-amino-acid polypeptide reads, in one-letter code: Light-independent protochlorophyllide reductase iron-sulfur ATP-binding protein (306 aa).

The tract at residues 1-31 is disordered; sequence MREAAGLEARGLKSPPILKGQDGEGSLQVHQ. Residues 50 to 55 and lysine 79 contribute to the ATP site; that span reads GIGKST. Residue serine 54 coordinates Mg(2+). [4Fe-4S] cluster contacts are provided by cysteine 135 and cysteine 169. 220–221 is a binding site for ATP; that stretch reads NR.

Belongs to the NifH/BchL/ChlL family. In terms of assembly, homodimer. Protochlorophyllide reductase is composed of three subunits; BchL, BchN and BchB. [4Fe-4S] cluster is required as a cofactor.

The catalysed reaction is chlorophyllide a + oxidized 2[4Fe-4S]-[ferredoxin] + 2 ADP + 2 phosphate = protochlorophyllide a + reduced 2[4Fe-4S]-[ferredoxin] + 2 ATP + 2 H2O. It functions in the pathway porphyrin-containing compound metabolism; bacteriochlorophyll biosynthesis (light-independent). Its function is as follows. Component of the dark-operative protochlorophyllide reductase (DPOR) that uses Mg-ATP and reduced ferredoxin to reduce ring D of protochlorophyllide (Pchlide) to form chlorophyllide a (Chlide). This reaction is light-independent. The L component serves as a unique electron donor to the NB-component of the complex, and binds Mg-ATP. This chain is Light-independent protochlorophyllide reductase iron-sulfur ATP-binding protein, found in Jannaschia sp. (strain CCS1).